The following is a 109-amino-acid chain: Large ribosomal subunit protein uL22 (109 aa).

Belongs to the universal ribosomal protein uL22 family. In terms of assembly, part of the 50S ribosomal subunit.

Functionally, this protein binds specifically to 23S rRNA; its binding is stimulated by other ribosomal proteins, e.g. L4, L17, and L20. It is important during the early stages of 50S assembly. It makes multiple contacts with different domains of the 23S rRNA in the assembled 50S subunit and ribosome. In terms of biological role, the globular domain of the protein is located near the polypeptide exit tunnel on the outside of the subunit, while an extended beta-hairpin is found that lines the wall of the exit tunnel in the center of the 70S ribosome. This Polynucleobacter asymbioticus (strain DSM 18221 / CIP 109841 / QLW-P1DMWA-1) (Polynucleobacter necessarius subsp. asymbioticus) protein is Large ribosomal subunit protein uL22.